We begin with the raw amino-acid sequence, 258 residues long: uncharacterized protein (258 aa).

The chain crosses the membrane as a helical span at residues 163–187 (GIVGAAGLMLMFADLNGIPGICLMG).

The protein localises to the membrane. This is an uncharacterized protein from Methanocaldococcus jannaschii (strain ATCC 43067 / DSM 2661 / JAL-1 / JCM 10045 / NBRC 100440) (Methanococcus jannaschii).